The sequence spans 333 residues: Lipoyl synthase (333 aa).

A compositionally biased stretch (polar residues) spans M1–Q15. Residues M1–T34 are disordered. C80, C85, C91, C106, C110, C113, and S320 together coordinate [4Fe-4S] cluster. Positions C91–T309 constitute a Radical SAM core domain.

This sequence belongs to the radical SAM superfamily. Lipoyl synthase family. It depends on [4Fe-4S] cluster as a cofactor.

Its subcellular location is the cytoplasm. The catalysed reaction is [[Fe-S] cluster scaffold protein carrying a second [4Fe-4S](2+) cluster] + N(6)-octanoyl-L-lysyl-[protein] + 2 oxidized [2Fe-2S]-[ferredoxin] + 2 S-adenosyl-L-methionine + 4 H(+) = [[Fe-S] cluster scaffold protein] + N(6)-[(R)-dihydrolipoyl]-L-lysyl-[protein] + 4 Fe(3+) + 2 hydrogen sulfide + 2 5'-deoxyadenosine + 2 L-methionine + 2 reduced [2Fe-2S]-[ferredoxin]. The protein operates within protein modification; protein lipoylation via endogenous pathway; protein N(6)-(lipoyl)lysine from octanoyl-[acyl-carrier-protein]: step 2/2. Its function is as follows. Catalyzes the radical-mediated insertion of two sulfur atoms into the C-6 and C-8 positions of the octanoyl moiety bound to the lipoyl domains of lipoate-dependent enzymes, thereby converting the octanoylated domains into lipoylated derivatives. In Bordetella parapertussis (strain 12822 / ATCC BAA-587 / NCTC 13253), this protein is Lipoyl synthase.